A 134-amino-acid polypeptide reads, in one-letter code: Small ribosomal subunit protein uS11 (134 aa).

The interval 114–134 (TPVPHNGTRPPRKWFKRQEKR) is disordered. Basic residues predominate over residues 123-134 (PPRKWFKRQEKR).

This sequence belongs to the universal ribosomal protein uS11 family. In terms of assembly, part of the 30S ribosomal subunit. Interacts with proteins S7 and S18. Binds to IF-3.

Its function is as follows. Located on the platform of the 30S subunit, it bridges several disparate RNA helices of the 16S rRNA. Forms part of the Shine-Dalgarno cleft in the 70S ribosome. The chain is Small ribosomal subunit protein uS11 from Mesomycoplasma hyopneumoniae (strain J / ATCC 25934 / NCTC 10110) (Mycoplasma hyopneumoniae).